The primary structure comprises 545 residues: MTTNYIFVTGGVVSSLGKGIAAASLAAILEARGLNVTIMKLDPYINVDPGTMSPIQHGEVFVTEDGAETDLDLGHYERFIRTKMSRRNNFTTGRIYSDVLRKERRGDYLGATIQVIPHITNAIKERIIEGGEDHDVVLVEIGGTVGDIESLPFLEAIRQMAVEVGREHTLYMHLTLVPYMAASGEVKTKPTQHSVKELLSIGIQPDVLICRSDRSVPNNERAKIALFCNVPEKAVISLKDVDSIYKIPALLKSQGLDDYICKRFGLNCPEADLSEWEQVIYQQANPVGEVTIGMVGKYIALPDAYKSVIEALKHAGLKNRLTVNIRLIDSQDVETRGVEILKDLDAILIPGGFGYRGVEGKILTAQYAREQNIPYLGICLGMQVALIEFARHVAGMQDANSTEFVPDCKYPVVALITEWRDEDGNVEMRSEQSHLGGTMRLGSQLCHLADDSLARSLYGEATILERHRHRYEVNNMLLKHLESAGLRVAGWSGDHKLVEIIEYPDHPWFVASQFHPEFTSTPRDGHPLFAGLVKAAGEYQKRAQK.

An amidoligase domain region spans residues 1–266; that stretch reads MTTNYIFVTG…DDYICKRFGL (266 aa). Position 14 (Ser-14) interacts with CTP. Ser-14 is a binding site for UTP. ATP contacts are provided by residues 15-20 and Asp-72; that span reads SLGKGI. Residues Asp-72 and Glu-140 each coordinate Mg(2+). CTP contacts are provided by residues 147–149, 187–192, and Lys-223; these read DIE and KTKPTQ. Residues 187–192 and Lys-223 contribute to the UTP site; that span reads KTKPTQ. 239 to 241 is an ATP binding site; it reads KDV. The region spanning 291–542 is the Glutamine amidotransferase type-1 domain; the sequence is TIGMVGKYIA…VKAAGEYQKR (252 aa). Gly-352 is a binding site for L-glutamine. The Nucleophile; for glutamine hydrolysis role is filled by Cys-379. Residues 380-383, Glu-403, and Arg-470 each bind L-glutamine; that span reads LGMQ. Active-site residues include His-515 and Glu-517.

The protein belongs to the CTP synthase family. As to quaternary structure, homotetramer.

It carries out the reaction UTP + L-glutamine + ATP + H2O = CTP + L-glutamate + ADP + phosphate + 2 H(+). The catalysed reaction is L-glutamine + H2O = L-glutamate + NH4(+). The enzyme catalyses UTP + NH4(+) + ATP = CTP + ADP + phosphate + 2 H(+). It functions in the pathway pyrimidine metabolism; CTP biosynthesis via de novo pathway; CTP from UDP: step 2/2. Allosterically activated by GTP, when glutamine is the substrate; GTP has no effect on the reaction when ammonia is the substrate. The allosteric effector GTP functions by stabilizing the protein conformation that binds the tetrahedral intermediate(s) formed during glutamine hydrolysis. Inhibited by the product CTP, via allosteric rather than competitive inhibition. Functionally, catalyzes the ATP-dependent amination of UTP to CTP with either L-glutamine or ammonia as the source of nitrogen. Regulates intracellular CTP levels through interactions with the four ribonucleotide triphosphates. The chain is CTP synthase from Sodalis glossinidius (strain morsitans).